Reading from the N-terminus, the 532-residue chain is 2,3-bisphosphoglycerate-independent phosphoglycerate mutase (532 aa).

Positions 15 and 65 each coordinate Mn(2+). Ser65 (phosphoserine intermediate) is an active-site residue. Residues His126, 156-157 (RD), Arg188, Arg194, 258-261 (RPDR), and Lys331 contribute to the substrate site. The Mn(2+) site is built by Asp398, His402, Asp439, His440, and His457.

The protein belongs to the BPG-independent phosphoglycerate mutase family. Monomer. The cofactor is Mn(2+).

It carries out the reaction (2R)-2-phosphoglycerate = (2R)-3-phosphoglycerate. It participates in carbohydrate degradation; glycolysis; pyruvate from D-glyceraldehyde 3-phosphate: step 3/5. In terms of biological role, catalyzes the interconversion of 2-phosphoglycerate and 3-phosphoglycerate. This is 2,3-bisphosphoglycerate-independent phosphoglycerate mutase from Gloeothece citriformis (strain PCC 7424) (Cyanothece sp. (strain PCC 7424)).